A 212-amino-acid chain; its full sequence is Pyridoxine/pyridoxamine 5'-phosphate oxidase (212 aa).

Substrate is bound by residues 8 to 11 (RREY) and lysine 66. Residues 61-66 (RIVLLK), 76-77 (FT), arginine 82, lysine 83, and glutamine 105 each bind FMN. Residues tyrosine 123, arginine 127, and serine 131 each coordinate substrate. FMN is bound by residues 140 to 141 (QS) and tryptophan 185. Substrate is bound at residue 191–193 (RLH). Arginine 195 provides a ligand contact to FMN.

The protein belongs to the pyridoxamine 5'-phosphate oxidase family. As to quaternary structure, homodimer. The cofactor is FMN.

It catalyses the reaction pyridoxamine 5'-phosphate + O2 + H2O = pyridoxal 5'-phosphate + H2O2 + NH4(+). The catalysed reaction is pyridoxine 5'-phosphate + O2 = pyridoxal 5'-phosphate + H2O2. It participates in cofactor metabolism; pyridoxal 5'-phosphate salvage; pyridoxal 5'-phosphate from pyridoxamine 5'-phosphate: step 1/1. Its pathway is cofactor metabolism; pyridoxal 5'-phosphate salvage; pyridoxal 5'-phosphate from pyridoxine 5'-phosphate: step 1/1. Catalyzes the oxidation of either pyridoxine 5'-phosphate (PNP) or pyridoxamine 5'-phosphate (PMP) into pyridoxal 5'-phosphate (PLP). This chain is Pyridoxine/pyridoxamine 5'-phosphate oxidase, found in Shewanella sp. (strain MR-7).